Reading from the N-terminus, the 311-residue chain is Putative mitochondrial transporter UCP3 (311 aa).

Over 1–10 the chain is Mitochondrial intermembrane; the sequence is MVGLQPSERP. A helical transmembrane segment spans residues 11 to 32; that stretch reads PTTSVKFLAAGTAACFADLLTF. Solcar repeat units lie at residues 11 to 105, 114 to 205, and 214 to 299; these read PTTS…VKQF, SSII…IKEK, and DNFP…MKRA. At 33 to 76 the chain is on the mitochondrial matrix side; sequence PLDTAKVRLQIQGENQAALAARSAQYRGVLGTILTMVRTEGPRS. Residues 77–99 traverse the membrane as a helical segment; it reads LYSGLVAGLQRQMSFASIRIGLY. Over 100–119 the chain is Mitochondrial intermembrane; it reads DSVKQFYTPKGSDHSSIITR. A helical membrane pass occupies residues 120-136; it reads ILAGCTTGAMAVTCAQP. Residues 137–182 are Mitochondrial matrix-facing; sequence TDVVKIRFQASMHTGLGGNRKYSGTMDAYRTIAREEGVRGLWKGIL. A helical transmembrane segment spans residues 183-199; it reads PNITRNAIVNCGEMVTY. Residues 200-216 lie on the Mitochondrial intermembrane side of the membrane; the sequence is DIIKEKLLDYHLLTDNF. The chain crosses the membrane as a helical span at residues 217–236; it reads PCHFVSAFGAGFCATLVASP. The Mitochondrial matrix segment spans residues 237–270; it reads VDVVKTRYMNSPPGQYHSPFDCMLKMVTQEGPTA. The chain crosses the membrane as a helical span at residues 271 to 293; sequence FYKGFTPSFLRLGSWNVVMFVTY. The interval 278 to 300 is purine nucleotide binding; it reads SFLRLGSWNVVMFVTYEQMKRAL. The Mitochondrial intermembrane segment spans residues 294-311; that stretch reads EQMKRALMKVQMLRDSPF.

This sequence belongs to the mitochondrial carrier (TC 2.A.29) family. In terms of assembly, interacts with HAX1; the interaction is direct and calcium-dependent.

It is found in the mitochondrion inner membrane. Its function is as follows. Putative transmembrane transporter that plays a role in mitochondrial metabolism via an as yet unclear mechanism. Originally, this mitochondrial protein was thought to act as a proton transmembrane transporter from the mitochondrial intermembrane space into the matrix, causing proton leaks through the inner mitochondrial membrane, thereby uncoupling mitochondrial membrane potential generation from ATP synthesis. However, this function is controversial and uncoupling may not be the function, or at least not the main function, but rather a consequence of more conventional metabolite transporter activity. The chain is Putative mitochondrial transporter UCP3 from Bos taurus (Bovine).